A 96-amino-acid polypeptide reads, in one-letter code: Co-chaperonin GroES (96 aa).

This sequence belongs to the GroES chaperonin family. In terms of assembly, heptamer of 7 subunits arranged in a ring. Interacts with the chaperonin GroEL.

Its subcellular location is the cytoplasm. Functionally, together with the chaperonin GroEL, plays an essential role in assisting protein folding. The GroEL-GroES system forms a nano-cage that allows encapsulation of the non-native substrate proteins and provides a physical environment optimized to promote and accelerate protein folding. GroES binds to the apical surface of the GroEL ring, thereby capping the opening of the GroEL channel. This chain is Co-chaperonin GroES, found in Actinobacillus pleuropneumoniae serotype 3 (strain JL03).